The primary structure comprises 169 residues: Putative lipocalin R877 (169 aa).

Positions 1–18 (MWIIILIVIIVIITIIFS) are cleaved as a signal peptide.

The protein belongs to the calycin superfamily. Lipocalin family.

It is found in the secreted. It localises to the virion. Functionally, could play a role in the transport of a small ligand. This chain is Putative lipocalin R877, found in Acanthamoeba polyphaga mimivirus (APMV).